We begin with the raw amino-acid sequence, 453 residues long: Protein LOW PSII ACCUMULATION 1, chloroplastic (453 aa).

The transit peptide at 1–92 (MAVATAPSLN…LDLFKRGRVK (92 aa)) directs the protein to the chloroplast. TPR repeat units follow at residues 75–108 (AELC…APNP) and 112–145 (QAAY…YNLK). 2 consecutive transmembrane segments (helical) span residues 202 to 222 (FFYF…VPRL) and 238 to 258 (TTGN…LFLW).

As to quaternary structure, interacts with psbA, but not with psbD, petB, ALB3, LPA2 or LPA3. Is not a component of the PSII complex.

The protein localises to the plastid. It is found in the chloroplast thylakoid membrane. Its function is as follows. Chaperone required for efficient photosystem II (PSII) assembly. Binds to psbA during de novo biogenesis of PSII. This is Protein LOW PSII ACCUMULATION 1, chloroplastic (LPA1) from Arabidopsis thaliana (Mouse-ear cress).